The sequence spans 616 residues: Chaperone protein HscA (616 aa).

This sequence belongs to the heat shock protein 70 family.

Chaperone involved in the maturation of iron-sulfur cluster-containing proteins. Has a low intrinsic ATPase activity which is markedly stimulated by HscB. Involved in the maturation of IscU. The chain is Chaperone protein HscA from Yersinia enterocolitica serotype O:8 / biotype 1B (strain NCTC 13174 / 8081).